Here is a 117-residue protein sequence, read N- to C-terminus: uncharacterized protein (117 aa).

The chain crosses the membrane as a helical span at residues 57–77; it reads LGFPLGLLVFLHSLIVARFFV.

The protein resides in the membrane. This is an uncharacterized protein from Schizosaccharomyces pombe (strain 972 / ATCC 24843) (Fission yeast).